A 178-amino-acid polypeptide reads, in one-letter code: 2-C-methyl-D-erythritol 2,4-cyclodiphosphate synthase (178 aa).

Positions 24, 26, and 61 each coordinate a divalent metal cation. A 4-CDP-2-C-methyl-D-erythritol 2-phosphate-binding site is contributed by 24–26 (DSH). 150-153 (TSGE) is a binding site for 4-CDP-2-C-methyl-D-erythritol 2-phosphate.

Belongs to the IspF family. As to quaternary structure, homotrimer. It depends on a divalent metal cation as a cofactor.

The catalysed reaction is 4-CDP-2-C-methyl-D-erythritol 2-phosphate = 2-C-methyl-D-erythritol 2,4-cyclic diphosphate + CMP. It participates in isoprenoid biosynthesis; isopentenyl diphosphate biosynthesis via DXP pathway; isopentenyl diphosphate from 1-deoxy-D-xylulose 5-phosphate: step 4/6. Its function is as follows. Involved in the biosynthesis of isopentenyl diphosphate (IPP) and dimethylallyl diphosphate (DMAPP), two major building blocks of isoprenoid compounds. Catalyzes the conversion of 4-diphosphocytidyl-2-C-methyl-D-erythritol 2-phosphate (CDP-ME2P) to 2-C-methyl-D-erythritol 2,4-cyclodiphosphate (ME-CPP) with a corresponding release of cytidine 5-monophosphate (CMP). This is 2-C-methyl-D-erythritol 2,4-cyclodiphosphate synthase from Chlamydia muridarum (strain MoPn / Nigg).